A 671-amino-acid chain; its full sequence is MATTTPPETKSAAWWNYFFLYDGSKVKGEGDPTRAGICYFYPPQTLLDQQELLCGQLAGVVRCLWDLSGTPPMLIRMRNLKFAIRADGDYLWALGCGVEISDASCRQFLDQLIGFFHFYMGPVSLAYKSHPQEELSLQWDTSITQVLRSTSESHRIFNALWNLDRTKVEPLLLLKAALILQTCQRSPHVLAGCILYKGLIVNSQLLPSLTAKVLLHQTVPADQRLPGAGAAPQETGAALPPDVQITSVFLSEEEVASLHEFPVEHETRLQGSSVQYPPWDQSSPTQAEDAWASAAIPEPTPHDGACPSGSGADERLPRLEQECAGPTGLCTTACGQGSGLSSRLQKELCLSREELDSSEMHVSEAQEAFPPLPALGDLETLHSSHSAPTLPEDTAICSCLHPCPLERLPESGRLGQLADLPLTNGQTQVPGTDPLPSSMPVALPPQHPVGVEPSVEPYGNGAQESHSALPRSSRSPDSPGPSPSADRTGFKPSPSGRHAGLVPMNLYTHSVNGLVLSLLAEETLLSDTAAIEEVYHSSLASLNGLEVHLKETLPRDEASLTSSTYNFLHYDRIQSVLSANLPLVTAPQDRRFLQAVNLMHSDFALLPMLYEMTIRNASTAVYACSSPAQETYFQQLAPTARSSGFPNPQDCAFSLAGKAKQKLLKHGVNLL.

Residues 269 to 286 (LQGSSVQYPPWDQSSPTQ) are compositionally biased toward polar residues. Disordered stretches follow at residues 269-291 (LQGSSVQYPPWDQSSPTQAEDAW) and 417-497 (LADL…PSGR). A compositionally biased stretch (low complexity) spans 467–477 (SALPRSSRSPD).

In terms of assembly, component of the biogenesis of lysosome-related organelles complex-3 (or BLOC-3), a heterodimer of HPS1 and HPS4. HPS4 and the BLOC-3 complex interact with the GTP-bound form of RAB9B but not with the GDP-bound form of RAB9B. HPS4 and the BLOC-3 complex interact with the GTP-bound form of RAB9A but not with the GDP-bound form of RAB9A. HPS4 does not interact RAB4A and RAB7A. Highly expressed in heart, brain, liver and testis. Expressed at lower level in skeletal muscle.

Component of the BLOC-3 complex, a complex that acts as a guanine exchange factor (GEF) for RAB32 and RAB38, promotes the exchange of GDP to GTP, converting them from an inactive GDP-bound form into an active GTP-bound form. The BLOC-3 complex plays an important role in the control of melanin production and melanosome biogenesis and promotes the membrane localization of RAB32 and RAB38. In Mus musculus (Mouse), this protein is BLOC-3 complex member HPS4 (Hps4).